Here is a 180-residue protein sequence, read N- to C-terminus: Uterocalin (180 aa).

The N-terminal stretch at 1-18 (MNLLLLAMGLILPRRPHA) is a signal peptide. The cysteines at positions 82 and 175 are disulfide-linked. Asn-101 is a glycosylation site (N-linked (GlcNAc...) asparagine).

It belongs to the calycin superfamily. Lipocalin family. As to expression, expressed in glandular and lumenal epithelia of the endometrium. Is transferred to the embryonic capsule, the conceptus and the yolk sac.

The protein localises to the secreted. Binds fatty acids and retinol. Is specialized for the preattachment embryo. May be important to maintain the pregnancy and may transport small hydrophobic ligands from mother to the developing embryo. This is Uterocalin from Equus caballus (Horse).